The primary structure comprises 469 residues: Glutamate--tRNA ligase (469 aa).

The short motif at proline 8 to glycine 18 is the 'HIGH' region element. The Zn(2+) site is built by cysteine 97, cysteine 99, cysteine 124, and aspartate 126. A 'KMSKS' region motif is present at residues lysine 236 to arginine 240. Lysine 239 serves as a coordination point for ATP.

Belongs to the class-I aminoacyl-tRNA synthetase family. Glutamate--tRNA ligase type 1 subfamily. Monomer. The cofactor is Zn(2+).

It localises to the cytoplasm. The enzyme catalyses tRNA(Glu) + L-glutamate + ATP = L-glutamyl-tRNA(Glu) + AMP + diphosphate. In terms of biological role, catalyzes the attachment of glutamate to tRNA(Glu) in a two-step reaction: glutamate is first activated by ATP to form Glu-AMP and then transferred to the acceptor end of tRNA(Glu). The protein is Glutamate--tRNA ligase of Francisella philomiragia subsp. philomiragia (strain ATCC 25017 / CCUG 19701 / FSC 153 / O#319-036).